The sequence spans 313 residues: Olfactory receptor 8B2 (313 aa).

Over 1–25 (MLARNNSLVTEFILAGLTDHPEFRQ) the chain is Extracellular. Asparagine 5 carries N-linked (GlcNAc...) asparagine glycosylation. The helical transmembrane segment at 26-46 (PLFFLFLVIYIVTMVGNLGLI) threads the bilayer. At 47 to 54 (TLFGLNSH) the chain is on the cytoplasmic side. The chain crosses the membrane as a helical span at residues 55 to 75 (LHTPMYYFLFNLSFIDLCYSS). Residues 76 to 99 (VFTPKMLMNFVSKKNIISNVGCMT) are Extracellular-facing. A disulfide bridge links cysteine 97 with cysteine 189. Residues 100-120 (RLFFFLFFVISECYMLTSMAY) traverse the membrane as a helical segment. Residues 121-139 (DRYVAICNPLLYKVTMSHQ) are Cytoplasmic-facing. Residues 140–160 (VCSMLTFAAYIMGLAGATAHT) form a helical membrane-spanning segment. Over 161-197 (GCMLRLTFCSANIINHYLCDILPLLQLSCTSTYVNEV) the chain is Extracellular. The chain crosses the membrane as a helical span at residues 198 to 217 (VVLIVVGTNITVPSCTILIS). Residues 218–237 (YVFIVTSILHIKSTQGRSKA) lie on the Cytoplasmic side of the membrane. A helical membrane pass occupies residues 238 to 258 (FSTCSSHVIALSLFFGSAAFM). Residues 259–270 (YIKYSSGSMEQG) are Extracellular-facing. The helical transmembrane segment at 271 to 291 (KVSSVFYTNVVPMLNPLIYSL) threads the bilayer. Residues 292–313 (RNKDVKVALRKALIKIQRRNIF) are Cytoplasmic-facing.

Belongs to the G-protein coupled receptor 1 family.

The protein localises to the cell membrane. Its function is as follows. Odorant receptor. This chain is Olfactory receptor 8B2 (OR8B2), found in Homo sapiens (Human).